We begin with the raw amino-acid sequence, 70 residues long: Putative microRNA 17 host gene protein (70 aa).

The Cytoplasmic segment spans residues 1–20 (MFCHVDVKISSKRYTWTKLP). Residues 21–43 (LNVPKLVLIYLQSHFVLFFFSMC) form a helical membrane-spanning segment. At 44–70 (QSIWERPAIGRATTSSASWMVGYDCLL) the chain is on the extracellular side.

In terms of tissue distribution, highly expressed in B-cell lymphoma and lung cancer.

Its subcellular location is the membrane. The protein is Putative microRNA 17 host gene protein (MIR17HG) of Homo sapiens (Human).